A 68-amino-acid polypeptide reads, in one-letter code: Large ribosomal subunit protein bL35 (68 aa).

This sequence belongs to the bacterial ribosomal protein bL35 family.

This chain is Large ribosomal subunit protein bL35, found in Orientia tsutsugamushi (strain Ikeda) (Rickettsia tsutsugamushi).